A 548-amino-acid polypeptide reads, in one-letter code: MFS-type transporter TOXA (548 aa).

Residues 1–12 (MDEQIVSASSNV) show a composition bias toward polar residues. The interval 1–33 (MDEQIVSASSNVKDGVEKQPVKDREDVDANVVP) is disordered. Residues 14 to 27 (DGVEKQPVKDREDV) show a composition bias toward basic and acidic residues. Helical transmembrane passes span 43-63 (ISLI…FLGA), 85-105 (AVAW…PLFG), 114-134 (KWLF…CALA), 146-166 (VAGI…ALIV), 177-197 (MIGA…GAIA), 204-224 (WCFW…LFFF), 250-270 (IGAG…QWGG), 280-300 (VVAL…HQYW), 316-336 (GFLL…AALY), 357-377 (MLPI…TISF), 382-402 (APFI…LYTF), 411-431 (IIGY…QAFI), 444-464 (YASA…LCVC), and 518-538 (FLVA…LSWA).

This sequence belongs to the major facilitator superfamily. TCR/Tet family.

The protein resides in the membrane. Its function is as follows. MFS-type transporter; part of the diffuse TOX2 gene cluster that mediates the biosynthesis of the HC-toxin, cyclic tetrapeptide of structure cyclo(D-Pro-L-Ala-D-Ala-L-Aeo), where Aeo stands for 2-amino-9,10-epoxi-8-oxodecanoic acid. HC-toxin is a determinant of specificity and virulence in the interaction between the producing fungus and its host, maize. TOXA acts as a HC-toxin efflux pump which contributes to self-protection against HC-toxin and/or the secretion of HC-toxin into the extracellular milieu. This Cochliobolus carbonum (Maize leaf spot fungus) protein is MFS-type transporter TOXA.